Reading from the N-terminus, the 296-residue chain is Cytidine deaminase (296 aa).

CMP/dCMP-type deaminase domains are found at residues 47 to 167 (TEAE…FGPK) and 186 to 296 (DSSD…VDPV). A substrate-binding site is contributed by 88-90 (NLE). Histidine 101 is a binding site for Zn(2+). The Proton donor role is filled by glutamate 103. Zn(2+) is bound by residues cysteine 128 and cysteine 131.

This sequence belongs to the cytidine and deoxycytidylate deaminase family. Homodimer. The cofactor is Zn(2+).

It catalyses the reaction cytidine + H2O + H(+) = uridine + NH4(+). It carries out the reaction 2'-deoxycytidine + H2O + H(+) = 2'-deoxyuridine + NH4(+). In terms of biological role, this enzyme scavenges exogenous and endogenous cytidine and 2'-deoxycytidine for UMP synthesis. This is Cytidine deaminase from Shewanella sp. (strain MR-7).